The primary structure comprises 347 residues: Nicotinate-nucleotide--dimethylbenzimidazole phosphoribosyltransferase (347 aa).

Glu316 (proton acceptor) is an active-site residue.

This sequence belongs to the CobT family.

The catalysed reaction is 5,6-dimethylbenzimidazole + nicotinate beta-D-ribonucleotide = alpha-ribazole 5'-phosphate + nicotinate + H(+). The protein operates within nucleoside biosynthesis; alpha-ribazole biosynthesis; alpha-ribazole from 5,6-dimethylbenzimidazole: step 1/2. In terms of biological role, catalyzes the synthesis of alpha-ribazole-5'-phosphate from nicotinate mononucleotide (NAMN) and 5,6-dimethylbenzimidazole (DMB). This Vibrio parahaemolyticus serotype O3:K6 (strain RIMD 2210633) protein is Nicotinate-nucleotide--dimethylbenzimidazole phosphoribosyltransferase.